The sequence spans 1663 residues: Cortactin-binding protein 2 (1663 aa).

Disordered stretches follow at residues 1–26 (MATD…TAEA), 203–225 (KKKT…DMEA), 359–440 (QASH…LHPG), 454–478 (GNAN…SPTS), and 497–615 (SRFT…PPKP). Residues 119–276 (RKMQERMSTQ…EQLKRGSDSK (158 aa)) are a coiled coil. 2 stretches are compositionally biased toward polar residues: residues 385 to 396 (GPSTDSAPDLTN) and 418 to 435 (QSHS…SANA). Position 498 is an asymmetric dimethylarginine (Arg498). A compositionally biased stretch (pro residues) spans 606–615 (PTTPQLPPKP). ANK repeat units follow at residues 709–739 (GRPT…DINY), 743–772 (DGHS…QVDA), 776–805 (NGFT…DINH), 809–838 (GGQT…DRSV), 842–871 (DGWT…PARG), and 912–942 (EGWT…EPDR). The tract at residues 1449 to 1490 (KGENGTWRKVSTSPRKKSGHFSSPTWNKPDLNEEGIRNTTTS) is disordered. The residue at position 1524 (Ser1524) is a Phosphoserine. Residues 1579–1663 (VSEKEVSPLS…KNEQVEKPNK (85 aa)) are disordered. A compositionally biased stretch (polar residues) spans 1586–1595 (PLSSHQTTEC). Low complexity predominate over residues 1624 to 1638 (SQNTKRSSSSSNTRQ). Basic and acidic residues predominate over residues 1645–1663 (SKEEIWNLHKNEQVEKPNK).

Interacts with CTTN/cortactin SH3 domain. Interacts with STRN, STRN4/zinedin and MOB4/phocein; this interactions mediate the association with the STRIPAK core complex and may regulate dendritic spine distribution of the STRIPAK complex in hippocampal neurons. Activation of glutamate receptors weakens the interaction with STRN and STRN4.

The protein localises to the cytoplasm. It is found in the cell cortex. It localises to the cell projection. The protein resides in the dendritic spine. Its function is as follows. Regulates the dendritic spine distribution of CTTN/cortactin in hippocampal neurons, and thus controls dendritic spinogenesis and dendritic spine maintenance. Associates with the striatin-interacting phosphatase and kinase (STRIPAK) core complex to regulate dendritic spine distribution of the STRIPAK complex in hippocampal neurons. This Rhinolophus ferrumequinum (Greater horseshoe bat) protein is Cortactin-binding protein 2 (CTTNBP2).